The following is a 422-amino-acid chain: UDP-N-acetylglucosamine 1-carboxyvinyltransferase (422 aa).

Residue 23–24 coordinates phosphoenolpyruvate; it reads KN. Arg-92 is a UDP-N-acetyl-alpha-D-glucosamine binding site. The Proton donor role is filled by Cys-116. Cys-116 carries the 2-(S-cysteinyl)pyruvic acid O-phosphothioketal modification. UDP-N-acetyl-alpha-D-glucosamine is bound by residues 121–125, 161–165, Asp-306, and Ile-328; these read RPVDL and KVSVG.

Belongs to the EPSP synthase family. MurA subfamily.

It localises to the cytoplasm. It carries out the reaction phosphoenolpyruvate + UDP-N-acetyl-alpha-D-glucosamine = UDP-N-acetyl-3-O-(1-carboxyvinyl)-alpha-D-glucosamine + phosphate. Its pathway is cell wall biogenesis; peptidoglycan biosynthesis. Cell wall formation. Adds enolpyruvyl to UDP-N-acetylglucosamine. The polypeptide is UDP-N-acetylglucosamine 1-carboxyvinyltransferase (Aliivibrio fischeri (strain MJ11) (Vibrio fischeri)).